The following is a 74-amino-acid chain: Translational regulator CsrA (74 aa).

The protein belongs to the CsrA/RsmA family. In terms of assembly, homodimer; the beta-strands of each monomer intercalate to form a hydrophobic core, while the alpha-helices form wings that extend away from the core.

It localises to the cytoplasm. Its function is as follows. A translational regulator that binds mRNA to regulate translation initiation and/or mRNA stability. Usually binds in the 5'-UTR at or near the Shine-Dalgarno sequence preventing ribosome-binding, thus repressing translation. Its main target seems to be the major flagellin gene, while its function is anatagonized by FliW. This chain is Translational regulator CsrA, found in Alkaliphilus oremlandii (strain OhILAs) (Clostridium oremlandii (strain OhILAs)).